Reading from the N-terminus, the 75-residue chain is uncharacterized protein (75 aa).

This is an uncharacterized protein from Escherichia coli (strain K12).